The chain runs to 325 residues: Tetraacyldisaccharide 4'-kinase (325 aa).

ATP is bound at residue 55–62; sequence TAGGNGKT.

Belongs to the LpxK family.

The enzyme catalyses a lipid A disaccharide + ATP = a lipid IVA + ADP + H(+). It functions in the pathway glycolipid biosynthesis; lipid IV(A) biosynthesis; lipid IV(A) from (3R)-3-hydroxytetradecanoyl-[acyl-carrier-protein] and UDP-N-acetyl-alpha-D-glucosamine: step 6/6. Transfers the gamma-phosphate of ATP to the 4'-position of a tetraacyldisaccharide 1-phosphate intermediate (termed DS-1-P) to form tetraacyldisaccharide 1,4'-bis-phosphate (lipid IVA). The protein is Tetraacyldisaccharide 4'-kinase of Salmonella newport (strain SL254).